Reading from the N-terminus, the 334-residue chain is MADQIAISVLGAGSYGSALAISLARNGHPTLLWGHDPAHVAELEQDRCNKAFLPDVPFPADLQLTADLQQAVQAAPVLLLVVPSHVFGQVLAQVKPFLRPDTRIAWATKGLEPDSGRLLQDVAREVLGDEMPLAVISGPTFAKELAAGLPTAISVASTHDDFADDLSLLLHCGRSFRVYTNPDFIGLQLGGAVKNVIAIGAGLSDGLGFGANARTALITRGLVEMQRLGAALGADAKTFMGMAGLGDLVLTCTDNQSRNRRFGLALGAGKDVNTAMAEIGQVVEGYRNTKEVHLLAARCGVEMPICEQIFKVLYEGKNPKEAAIALLSRDKKDE.

NADPH-binding residues include serine 14, tyrosine 15, histidine 35, and lysine 109. Positions 109, 138, and 140 each coordinate sn-glycerol 3-phosphate. Residue alanine 142 coordinates NADPH. Lysine 194, aspartate 247, serine 257, arginine 258, and asparagine 259 together coordinate sn-glycerol 3-phosphate. The Proton acceptor role is filled by lysine 194. Arginine 258 serves as a coordination point for NADPH. Residues valine 282 and glutamate 284 each coordinate NADPH.

The protein belongs to the NAD-dependent glycerol-3-phosphate dehydrogenase family.

It is found in the cytoplasm. It catalyses the reaction sn-glycerol 3-phosphate + NAD(+) = dihydroxyacetone phosphate + NADH + H(+). It carries out the reaction sn-glycerol 3-phosphate + NADP(+) = dihydroxyacetone phosphate + NADPH + H(+). It participates in membrane lipid metabolism; glycerophospholipid metabolism. Its function is as follows. Catalyzes the reduction of the glycolytic intermediate dihydroxyacetone phosphate (DHAP) to sn-glycerol 3-phosphate (G3P), the key precursor for phospholipid synthesis. This chain is Glycerol-3-phosphate dehydrogenase [NAD(P)+], found in Aeromonas hydrophila subsp. hydrophila (strain ATCC 7966 / DSM 30187 / BCRC 13018 / CCUG 14551 / JCM 1027 / KCTC 2358 / NCIMB 9240 / NCTC 8049).